A 295-amino-acid chain; its full sequence is Ribosomal protein L11 methyltransferase (295 aa).

4 residues coordinate S-adenosyl-L-methionine: Thr-150, Gly-171, Asp-193, and Asn-232.

This sequence belongs to the methyltransferase superfamily. PrmA family.

The protein resides in the cytoplasm. The enzyme catalyses L-lysyl-[protein] + 3 S-adenosyl-L-methionine = N(6),N(6),N(6)-trimethyl-L-lysyl-[protein] + 3 S-adenosyl-L-homocysteine + 3 H(+). Methylates ribosomal protein L11. The sequence is that of Ribosomal protein L11 methyltransferase from Neisseria meningitidis serogroup B (strain ATCC BAA-335 / MC58).